Consider the following 214-residue polypeptide: MSIGLVGRKVGMTRIFTENGASVPVTVLEMSNNRVTQVRTPENDGYSAVQVAYGSRRNSRVNKSEAGHYAKAGVDAGELLREFRVAADVAAQYQPGAAVSVEVFQAGQKVDVTGVTQGKGFAGTIKRHNFKSQRASHGNSRSHNVPGSIGMAQDPGRVFPGKRMSGHMGAVSCTKQNLEVVRVDAERGLVLLKGAVPGSKGGHVVVRPAVKGGA.

A disordered region spans residues 131-153 (KSQRASHGNSRSHNVPGSIGMAQ). The span at 132–145 (SQRASHGNSRSHNV) shows a compositional bias: polar residues. Position 153 is an N5-methylglutamine (Gln-153).

Belongs to the universal ribosomal protein uL3 family. Part of the 50S ribosomal subunit. Forms a cluster with proteins L14 and L19. Methylated by PrmB.

In terms of biological role, one of the primary rRNA binding proteins, it binds directly near the 3'-end of the 23S rRNA, where it nucleates assembly of the 50S subunit. This Thiobacillus denitrificans (strain ATCC 25259 / T1) protein is Large ribosomal subunit protein uL3.